Reading from the N-terminus, the 312-residue chain is D-alanine--D-alanine ligase (312 aa).

The ATP-grasp domain occupies K103–D303. Residue M130–T186 participates in ATP binding. D254, E270, and N272 together coordinate Mg(2+).

It belongs to the D-alanine--D-alanine ligase family. Mg(2+) serves as cofactor. The cofactor is Mn(2+).

It is found in the cytoplasm. The catalysed reaction is 2 D-alanine + ATP = D-alanyl-D-alanine + ADP + phosphate + H(+). It participates in cell wall biogenesis; peptidoglycan biosynthesis. Functionally, cell wall formation. The sequence is that of D-alanine--D-alanine ligase from Rhizorhabdus wittichii (strain DSM 6014 / CCUG 31198 / JCM 15750 / NBRC 105917 / EY 4224 / RW1) (Sphingomonas wittichii).